We begin with the raw amino-acid sequence, 471 residues long: L-lysine 2,3-aminomutase (471 aa).

Positions 120-332 (HRYPDRVLFL…GLRGHTSGYA (213 aa)) constitute a Radical SAM core domain. Residues Cys-134, Cys-138, and Cys-141 each coordinate [4Fe-4S] cluster. The residue at position 346 (Lys-346) is an N6-(pyridoxal phosphate)lysine.

It belongs to the radical SAM superfamily. KamA family. As to quaternary structure, homotetramer. Requires [4Fe-4S] cluster as cofactor. Pyridoxal 5'-phosphate is required as a cofactor.

The enzyme catalyses L-lysine = (3S)-3,6-diaminohexanoate. It participates in amino-acid degradation; L-lysine degradation via acetate pathway. Functionally, catalyzes the interconversion of L-alpha-lysine and L-beta-lysine. The chain is L-lysine 2,3-aminomutase (kamA) from Bacillus subtilis (strain 168).